The chain runs to 291 residues: MKVGVEAIRELRQITGAGLGDCKEALETCSGDMEKAKVYLREKGLSKAYKKSHRDAADGLVAVRVEGDKGAILKLGSETDFVARNEKFRSLAAELVSSLLKHGAEDLSSFSASPYDGGSGVSVADEVVNAAAVLGEHVVLSGIGFLELGGPGVIGSYIHGAVGEGIGRAGALVALEATTAKTEALLEFARQLAMHIVAAKPESVSVETLSNDLVEREREIVAKQVEALGKPESVASKIVDGRMQKFFEDMVLLEQTFIMDGSTKIRDLLHNKGQDLGCEVRIVAYRLFSVG.

Residues 79–82 (TDFV) are involved in Mg(2+) ion dislocation from EF-Tu.

The protein belongs to the EF-Ts family.

The protein resides in the cytoplasm. In terms of biological role, associates with the EF-Tu.GDP complex and induces the exchange of GDP to GTP. It remains bound to the aminoacyl-tRNA.EF-Tu.GTP complex up to the GTP hydrolysis stage on the ribosome. The polypeptide is Elongation factor Ts (Anaplasma marginale (strain St. Maries)).